The following is a 142-amino-acid chain: uncharacterized protein (142 aa).

The segment at 19-54 (IHTTPHPHTPHHTHHTHTTPTPTPHPHTHTPTPERS) is disordered. Basic residues predominate over residues 26–35 (HTPHHTHHTH).

This is an uncharacterized protein from Saccharomyces cerevisiae (strain ATCC 204508 / S288c) (Baker's yeast).